Here is a 258-residue protein sequence, read N- to C-terminus: Alpha-hydroxynitrile lyase (258 aa).

Catalysis depends on proton donor/acceptor residues Ser-81 and His-236.

The protein belongs to the AB hydrolase superfamily. Hydroxynitrile lyase family. In terms of assembly, homodimer.

The catalysed reaction is (R)-mandelonitrile = benzaldehyde + hydrogen cyanide. Involved in cyanogenesis, the release of HCN from injured tissues. Displays R-selective hydroxynitrile lyase activity. Also accepts nitromethane (MeNO2) as a donor in a reaction with aromatic aldehydes to yield (R)-beta-nitro alcohols. The sequence is that of Alpha-hydroxynitrile lyase from Arabidopsis thaliana (Mouse-ear cress).